The sequence spans 94 residues: Conotoxin Gla-MrII (94 aa).

A signal peptide spans 1-25 (MFGHTSVSFLLLSIVALGMVATVIC). 5 positions are modified to 4-carboxyglutamate: glutamate 30, glutamate 34, glutamate 37, glutamate 40, and glutamate 41. Residues 78–94 (STHMQKRFLRMPRDLAD) constitute a propeptide that is removed on maturation.

The protein belongs to the conotoxin I2 superfamily. In terms of processing, contains 4 disulfide bonds. As to expression, expressed by the venom duct.

Its subcellular location is the secreted. This is Conotoxin Gla-MrII from Conus marmoreus (Marble cone).